The sequence spans 478 residues: Aspartyl/glutamyl-tRNA(Asn/Gln) amidotransferase subunit B (478 aa).

Belongs to the GatB/GatE family. GatB subfamily. In terms of assembly, heterotrimer of A, B and C subunits.

It carries out the reaction L-glutamyl-tRNA(Gln) + L-glutamine + ATP + H2O = L-glutaminyl-tRNA(Gln) + L-glutamate + ADP + phosphate + H(+). It catalyses the reaction L-aspartyl-tRNA(Asn) + L-glutamine + ATP + H2O = L-asparaginyl-tRNA(Asn) + L-glutamate + ADP + phosphate + 2 H(+). Allows the formation of correctly charged Asn-tRNA(Asn) or Gln-tRNA(Gln) through the transamidation of misacylated Asp-tRNA(Asn) or Glu-tRNA(Gln) in organisms which lack either or both of asparaginyl-tRNA or glutaminyl-tRNA synthetases. The reaction takes place in the presence of glutamine and ATP through an activated phospho-Asp-tRNA(Asn) or phospho-Glu-tRNA(Gln). This is Aspartyl/glutamyl-tRNA(Asn/Gln) amidotransferase subunit B from Lachnoclostridium phytofermentans (strain ATCC 700394 / DSM 18823 / ISDg) (Clostridium phytofermentans).